Consider the following 406-residue polypeptide: Cytochrome P450 165C4 (406 aa).

Position 356 (cysteine 356) interacts with heme.

Belongs to the cytochrome P450 family. The cofactor is heme.

It functions in the pathway antibiotic biosynthesis; vancomycin biosynthesis. Its function is as follows. Involved in the coupling of aromatic side chains of the heptapeptide of vancomycin. The polypeptide is Cytochrome P450 165C4 (cyp165C4) (Amycolatopsis orientalis (Nocardia orientalis)).